A 1152-amino-acid polypeptide reads, in one-letter code: Syntaxin-binding protein 5 (1152 aa).

Residues 14–35 (TAGSSSASQQQQQQQHPPGNRE) form a disordered region. Positions 17–28 (SSSASQQQQQQQ) are enriched in low complexity. 10 WD repeats span residues 62 to 95 (SALA…CYCQ), 102 to 141 (VIQL…SLKF), 146 to 182 (VTFC…GYVI), 201 to 235 (HISD…DYRY), 241 to 273 (IHSV…PAKP), 295 to 337 (PILK…KSTA), 345 to 379 (IVDF…LIDL), 401 to 478 (TCCE…YKLK), 506 to 620 (QIIS…ELVI), and 634 to 696 (TSLA…SGAG). Disordered stretches follow at residues 555–596 (VDTP…GLRD) and 675–731 (SNDP…QKVN). At Ser-693 the chain carries Phosphoserine. The segment covering 713–722 (SPTSGSSSPH) has biased composition (low complexity). Phosphoserine is present on residues Ser-724 and Ser-760. Position 763 is a phosphothreonine (Thr-763). Position 783 is a phosphoserine (Ser-783). At Thr-785 the chain carries Phosphothreonine. Ser-786 bears the Phosphoserine mark. 4 WD repeats span residues 795-852 (ISAL…SGTI), 861-935 (RMAF…QSCA), 940-984 (ITET…LDVY), and 998-1021 (CFAN…TYSQ). The span at 883-893 (NVAEEKDEKEK) shows a compositional bias: basic and acidic residues. The interval 883–907 (NVAEEKDEKEKLKKRRPVSVSPSSS) is disordered. Ser-901 and Ser-903 each carry phosphoserine. At Thr-1040 the chain carries Phosphothreonine. Ser-1059 and Ser-1132 each carry phosphoserine. Positions 1087–1147 (GIEGVKGAAS…HEMMLKYKDK (61 aa)) constitute a v-SNARE coiled-coil homology domain.

The protein belongs to the WD repeat L(2)GL family. In terms of assembly, part of a complex that contains STX1, STXBP5, SNAP25 and SYT1. Interacts with STX1A and STX4A via its v-SNARE homology domain. Part of a complex that contains STXBP5, STX4A and SNAP23. In terms of tissue distribution, detected in heart, spleen, lung, skeletal muscle, liver and kidney (at protein level). Detected in brain, particularly in the olfactory bulb and in hippocampus. Detected in the tenia tecta and in the piriform layer of the brain cortex.

It localises to the cytoplasm. The protein resides in the cell membrane. Its subcellular location is the membrane. Plays a regulatory role in calcium-dependent exocytosis and neurotransmitter release. Inhibits membrane fusion between transport vesicles and the plasma membrane. May modulate the assembly of trans-SNARE complexes between transport vesicles and the plasma membrane. Competes with STXBP1 for STX1 binding. Inhibits translocation of GLUT4 from intracellular vesicles to the plasma membrane. This chain is Syntaxin-binding protein 5 (Stxbp5), found in Mus musculus (Mouse).